The primary structure comprises 557 residues: TWiK family of potassium channels protein 7 (557 aa).

2 disordered regions span residues 1-34 (MTSS…EALL) and 128-151 (DKSG…EEEE). Residues 1–165 (MTSSSRGYQR…RKFAKLVLPH (165 aa)) are Cytoplasmic-facing. Over residues 134 to 151 (DIDDESDDESKDEDEEEE) the composition is skewed to acidic residues. The chain crosses the membrane as a helical span at residues 166–186 (VALVLLTCTYTVIGALIFYSV). N-linked (GlcNAc...) asparagine glycosylation is found at asparagine 220 and asparagine 237. An intramembrane region (pore-forming) is located at residues 270 to 290 (SIFFAVTVVTTIGYGNPVPVT). Residues 295–315 (IWCILFSLLGIPLTLVTIADL) form a helical membrane-spanning segment. The Cytoplasmic segment spans residues 316–368 (GKFLSEHLVWLYGNYLKLKYLILSRHRKERREHVCEHCHSHGMGHDMNIEEKR). A helical transmembrane segment spans residues 369-389 (IPAFLVLAILIVYTAFGGVLM). The pore-forming intramembrane region spans 397-417 (FFTSFYWSFITMTTVGFGDLM). Residues 426–446 (IILLYIILGLAITTMCIDLVG) traverse the membrane as a helical segment. The Cytoplasmic portion of the chain corresponds to 447–557 (VQYIRKIHYF…SRYSLNRAFK (111 aa)).

Belongs to the two pore domain potassium channel (TC 1.A.1.8) family.

The protein resides in the membrane. The protein is TWiK family of potassium channels protein 7 (twk-7) of Caenorhabditis elegans.